Consider the following 180-residue polypeptide: ATP-dependent protease subunit HslV (180 aa).

Thr8 is a catalytic residue. 3 residues coordinate Na(+): Ala165, Cys168, and Thr171.

This sequence belongs to the peptidase T1B family. HslV subfamily. In terms of assembly, a double ring-shaped homohexamer of HslV is capped on each side by a ring-shaped HslU homohexamer. The assembly of the HslU/HslV complex is dependent on binding of ATP.

The protein resides in the cytoplasm. The catalysed reaction is ATP-dependent cleavage of peptide bonds with broad specificity.. With respect to regulation, allosterically activated by HslU binding. In terms of biological role, protease subunit of a proteasome-like degradation complex believed to be a general protein degrading machinery. The protein is ATP-dependent protease subunit HslV of Staphylococcus epidermidis (strain ATCC 12228 / FDA PCI 1200).